Here is an 800-residue protein sequence, read N- to C-terminus: Transducin beta-like protein 3 (800 aa).

Ala-2 bears the N-acetylalanine mark. WD repeat units lie at residues 64–105, 107–146, 149–190, 193–232, 245–284, 290–329, 332–372, 374–413, 419–459, 477–516, 519–560, 562–602, and 604–642; these read EDQE…RLWK, IHTA…GTHH, GSPG…CLAV, AHYS…ATRT, LPEE…CVHA, GPGR…LRKQ, GYSE…CQIL, GHTD…EVAC, GHTH…LSKG, CHDK…LLGT, GHRR…KTFE, HDAS…RTLD, and HEDK…EQAE. A Phosphoserine modification is found at Ser-257. A Glycyl lysine isopeptide (Lys-Gly) (interchain with G-Cter in SUMO2) cross-link involves residue Lys-407.

Part of the small subunit (SSU) processome, composed of more than 70 proteins and the RNA chaperone small nucleolar RNA (snoRNA) U3.

It is found in the nucleus. It localises to the nucleolus. In terms of biological role, part of the small subunit (SSU) processome, first precursor of the small eukaryotic ribosomal subunit. During the assembly of the SSU processome in the nucleolus, many ribosome biogenesis factors, an RNA chaperone and ribosomal proteins associate with the nascent pre-rRNA and work in concert to generate RNA folding, modifications, rearrangements and cleavage as well as targeted degradation of pre-ribosomal RNA by the RNA exosome. The chain is Transducin beta-like protein 3 (TBL3) from Bos taurus (Bovine).